Here is a 332-residue protein sequence, read N- to C-terminus: Fructose-1,6-bisphosphatase class 1 (332 aa).

Mg(2+)-binding residues include E89, D110, L112, and D113. Residues 113-116, N206, Y239, 257-259, and K269 each bind substrate; these read DGSS and YLY. A Mg(2+)-binding site is contributed by E275.

This sequence belongs to the FBPase class 1 family. Homotetramer. Mg(2+) is required as a cofactor.

The protein localises to the cytoplasm. The catalysed reaction is beta-D-fructose 1,6-bisphosphate + H2O = beta-D-fructose 6-phosphate + phosphate. The protein operates within carbohydrate biosynthesis; gluconeogenesis. The chain is Fructose-1,6-bisphosphatase class 1 from Cronobacter sakazakii (strain ATCC BAA-894) (Enterobacter sakazakii).